The chain runs to 138 residues: Ribulose bisphosphate carboxylase small subunit (138 aa).

This sequence belongs to the RuBisCO small chain family. As to quaternary structure, heterohexadecamer of 8 large and 8 small subunits.

The protein resides in the plastid. Its subcellular location is the chloroplast. Functionally, ruBisCO catalyzes two reactions: the carboxylation of D-ribulose 1,5-bisphosphate, the primary event in carbon dioxide fixation, as well as the oxidative fragmentation of the pentose substrate in the photorespiration process. Both reactions occur simultaneously and in competition at the same active site. Although the small subunit is not catalytic it is essential for maximal activity. In Porphyridium aerugineum (Red microalga), this protein is Ribulose bisphosphate carboxylase small subunit.